We begin with the raw amino-acid sequence, 299 residues long: KATNB1-like protein 1 (299 aa).

The Nuclear localization signal motif lies at 8 to 15 (VKKRNFSN). Serine 56 bears the Phosphoserine mark.

In terms of assembly, interacts with KATNA1 and KATNAL1; these interactions are competed by KATNB1 which has a higher affinity for them.

The protein localises to the nucleus. Its subcellular location is the cytoplasm. It is found in the cytoskeleton. The protein resides in the spindle pole. Functionally, regulates microtubule-severing activity of KATNAL1 in a concentration-dependent manner in vitro. This is KATNB1-like protein 1 (Katnbl1) from Mus musculus (Mouse).